We begin with the raw amino-acid sequence, 103 residues long: Small ribosomal subunit protein uS10 (103 aa).

This sequence belongs to the universal ribosomal protein uS10 family. Part of the 30S ribosomal subunit.

In terms of biological role, involved in the binding of tRNA to the ribosomes. This is Small ribosomal subunit protein uS10 from Verminephrobacter eiseniae (strain EF01-2).